A 419-amino-acid chain; its full sequence is Adenylosuccinate synthetase 1 (419 aa).

11–17 (GDEGKGK) contacts GTP. The Proton acceptor role is filled by Asp12. Asp12 and Gly39 together coordinate Mg(2+). IMP contacts are provided by residues 12–15 (DEGK), 37–40 (NAGH), Arg138, Gln220, and Arg298. His40 functions as the Proton donor in the catalytic mechanism. 294 to 300 (TVSKRPR) serves as a coordination point for substrate. GTP contacts are provided by residues Arg300, 326 to 328 (NVD), and 407 to 409 (SYG).

This sequence belongs to the adenylosuccinate synthetase family. In terms of assembly, homodimer. Mg(2+) serves as cofactor.

Its subcellular location is the cytoplasm. It catalyses the reaction IMP + L-aspartate + GTP = N(6)-(1,2-dicarboxyethyl)-AMP + GDP + phosphate + 2 H(+). Its pathway is purine metabolism; AMP biosynthesis via de novo pathway; AMP from IMP: step 1/2. In terms of biological role, plays an important role in the de novo pathway of purine nucleotide biosynthesis. Catalyzes the first committed step in the biosynthesis of AMP from IMP. The chain is Adenylosuccinate synthetase 1 from Photorhabdus laumondii subsp. laumondii (strain DSM 15139 / CIP 105565 / TT01) (Photorhabdus luminescens subsp. laumondii).